Reading from the N-terminus, the 451-residue chain is Photosystem II CP43 reaction center protein (451 aa).

Topologically, residues 1–46 (ATNRDQESSGFAWWAGNARLINLSGKLLGAHVAHAGLIVFWAGAMT) are cytoplasmic. Residues tryptophan 13, leucine 27, and alanine 30 each contribute to the chlorophyll a site. A helical transmembrane segment spans residues 47-71 (LFELAHFIPEKPMYEQGLILIPHIA). Topologically, residues 72–111 (TLGWGVGPGGEVVDTFPFFVVGVVHLISSAVLGFGGVYHA) are lumenal. The chlorophyll a site is built by valine 92 and glycine 106. The chain crosses the membrane as a helical span at residues 112–133 (IRGPETLEEYSSFFGYDWKDKN). At 134-155 (KMTTILGFHLIVLGIGALLLVA) the chain is on the cytoplasmic side. Isoleucine 138 is a chlorophyll a binding site. The chain crosses the membrane as a helical span at residues 156–178 (KAMFFGGLYDTWAPGGGDVRVIT). Residues 179–232 (NPTLDPRVIFGYLLKSPFGGEGWIVSVNNLEDVVGGHIWIGLICIAGGIWHILT) are Lumenal-facing. Chlorophyll a-binding residues include valine 211 and glycine 225. A helical transmembrane segment spans residues 233–253 (TPFGWARRAFIWSGEAYLSYS). Residues 254–268 (LGALSMMGFIATCFV) are Cytoplasmic-facing. A helical transmembrane segment spans residues 269-290 (WFNNTVYPSEFYGPTGPEASQA). The Lumenal portion of the chain corresponds to 291 to 424 (QAMTFLIRDQ…FLVGHLWHAG (134 aa)). A [CaMn4O5] cluster-binding site is contributed by glutamate 345. Residues leucine 404, phenylalanine 415, and glycine 418 each coordinate chlorophyll a. The chain crosses the membrane as a helical span at residues 425–449 (RARAAAAGFEKGIDRESEPVLSMPS). The Cytoplasmic portion of the chain corresponds to 450-451 (LD).

Belongs to the PsbB/PsbC family. PsbC subfamily. As to quaternary structure, PSII is composed of 1 copy each of membrane proteins PsbA, PsbB, PsbC, PsbD, PsbE, PsbF, PsbH, PsbI, PsbJ, PsbK, PsbL, PsbM, PsbT, PsbX, PsbY, PsbZ, Psb30/Ycf12, peripheral proteins PsbO, CyanoQ (PsbQ), PsbU, PsbV and a large number of cofactors. It forms dimeric complexes. Binds multiple chlorophylls and provides some of the ligands for the Ca-4Mn-5O cluster of the oxygen-evolving complex. It may also provide a ligand for a Cl- that is required for oxygen evolution. PSII binds additional chlorophylls, carotenoids and specific lipids. is required as a cofactor.

It is found in the cellular thylakoid membrane. One of the components of the core complex of photosystem II (PSII). It binds chlorophyll and helps catalyze the primary light-induced photochemical processes of PSII. PSII is a light-driven water:plastoquinone oxidoreductase, using light energy to abstract electrons from H(2)O, generating O(2) and a proton gradient subsequently used for ATP formation. The protein is Photosystem II CP43 reaction center protein of Thermostichus vulcanus (Synechococcus vulcanus).